The following is a 481-amino-acid chain: Glutamate--tRNA ligase (481 aa).

The 'HIGH' region motif lies at 10–20 (PSPTGHLHIGN). A 'KMSKS' region motif is present at residues 251–255 (KLSKR). Lysine 254 serves as a coordination point for ATP.

The protein belongs to the class-I aminoacyl-tRNA synthetase family. Glutamate--tRNA ligase type 1 subfamily. In terms of assembly, monomer.

It localises to the cytoplasm. It carries out the reaction tRNA(Glu) + L-glutamate + ATP = L-glutamyl-tRNA(Glu) + AMP + diphosphate. Its function is as follows. Catalyzes the attachment of glutamate to tRNA(Glu) in a two-step reaction: glutamate is first activated by ATP to form Glu-AMP and then transferred to the acceptor end of tRNA(Glu). The protein is Glutamate--tRNA ligase of Exiguobacterium sibiricum (strain DSM 17290 / CCUG 55495 / CIP 109462 / JCM 13490 / 255-15).